Here is a 477-residue protein sequence, read N- to C-terminus: Probable cytosolic Fe-S cluster assembly factor GK14772 (477 aa).

Residues Cys23, Cys69, Cys72, Cys75, Cys188, Cys244, Cys396, and Cys400 each contribute to the [4Fe-4S] cluster site.

This sequence belongs to the NARF family.

Functionally, component of the cytosolic iron-sulfur (Fe/S) protein assembly machinery. Required for maturation of extramitochondrial Fe/S proteins. This Drosophila willistoni (Fruit fly) protein is Probable cytosolic Fe-S cluster assembly factor GK14772.